Reading from the N-terminus, the 419-residue chain is UDP-N-acetylglucosamine 1-carboxyvinyltransferase 2 (419 aa).

Residue 22 to 23 (KN) coordinates phosphoenolpyruvate. Arg-92 serves as a coordination point for UDP-N-acetyl-alpha-D-glucosamine. Asp-116 serves as the catalytic Proton donor. UDP-N-acetyl-alpha-D-glucosamine contacts are provided by residues 121–125 (RPIDQ), Asp-306, and Leu-328.

This sequence belongs to the EPSP synthase family. MurA subfamily.

It localises to the cytoplasm. It carries out the reaction phosphoenolpyruvate + UDP-N-acetyl-alpha-D-glucosamine = UDP-N-acetyl-3-O-(1-carboxyvinyl)-alpha-D-glucosamine + phosphate. Its pathway is cell wall biogenesis; peptidoglycan biosynthesis. Cell wall formation. Adds enolpyruvyl to UDP-N-acetylglucosamine. The sequence is that of UDP-N-acetylglucosamine 1-carboxyvinyltransferase 2 from Latilactobacillus sakei subsp. sakei (strain 23K) (Lactobacillus sakei subsp. sakei).